Consider the following 372-residue polypeptide: DSC E3 ubiquitin ligase complex subunit 2 (372 aa).

A run of 5 helical transmembrane segments spans residues 26–46, 54–74, 95–115, 126–146, and 160–180; these read VVAG…LHLL, ILLW…LFII, YMFI…SLLF, TFLI…TVFV, and VIPM…NAFL. The tract at residues 246–314 is disordered; it reads TENENQVENP…LPTGPASQLY (69 aa). Residues 249–268 show a composition bias toward polar residues; the sequence is ENQVENPVSNADANDSPTRQ. At Ser-264 the chain carries Phosphoserine. Thr-266 carries the phosphothreonine modification. A compositionally biased stretch (low complexity) spans 269–284; sequence NARATAIASSSNTAAS. Residues 286–305 are compositionally biased toward polar residues; the sequence is RNRQQISHPPLGRTSSSSVL. Residues 332–368 enclose the UBA domain; sequence EDINTVQTIMQTSRAQAIQALSQTNDVQRAVELLLEQ.

In terms of assembly, component of the DSC E3 ubiquitin ligase complex composed of dsc1, dsc2, dsc3 and dsc4.

It is found in the golgi apparatus membrane. The catalysed reaction is S-ubiquitinyl-[E2 ubiquitin-conjugating enzyme]-L-cysteine + [acceptor protein]-L-lysine = [E2 ubiquitin-conjugating enzyme]-L-cysteine + N(6)-ubiquitinyl-[acceptor protein]-L-lysine.. The protein operates within protein modification; protein ubiquitination. Its function is as follows. Component of the DSC E3 ubiquitin ligase complex which is required for the sre1 transcriptional activator proteolytic cleavage to release the soluble transcription factor from the membrane in low oxygen or sterol conditions. The complex also plays an important role in the multivesicular body (MVB) pathway and functions in a post-endoplasmic reticulum pathway for protein degradation. The chain is DSC E3 ubiquitin ligase complex subunit 2 (dsc2) from Schizosaccharomyces pombe (strain 972 / ATCC 24843) (Fission yeast).